Consider the following 536-residue polypeptide: Arylsulfatase K (536 aa).

A signal peptide spans 1–22; that stretch reads MLLLWVSVVAALALAVLAPGAG. Residues Asp-40 and Cys-80 each coordinate Ca(2+). Cys-80 (nucleophile) is an active-site residue. Residue Cys-80 is modified to 3-oxoalanine (Cys). Asn-108 carries an N-linked (GlcNAc...) asparagine glycan. Lys-128 is a substrate binding site. N-linked (GlcNAc...) asparagine glycosylation is found at Asn-166 and Asn-193. Position 251 (His-251) interacts with substrate. Asn-262 is a glycosylation site (N-linked (GlcNAc...) asparagine). 2 residues coordinate Ca(2+): Asp-313 and His-314. N-linked (GlcNAc...) asparagine glycans are attached at residues Asn-375, Asn-413, and Asn-498.

The protein belongs to the sulfatase family. Requires Ca(2+) as cofactor. Post-translationally, the conversion to 3-oxoalanine (also known as C-formylglycine, FGly), of a serine or cysteine residue in prokaryotes and of a cysteine residue in eukaryotes, is critical for catalytic activity. In terms of processing, the 75-kDa precursor undergoes proteolytic processing to yield a 23 kDa form. N-glycosylated with both high mannose and complex type sugars. In terms of tissue distribution, expressed at high levels in the placenta and pancreas. Expressed at intermediate levels in the lung, brain, heart, liver and kidney and at low levels in the muscle.

The protein localises to the secreted. The protein resides in the lysosome. It catalyses the reaction an aryl sulfate + H2O = a phenol + sulfate + H(+). The catalysed reaction is Hydrolysis of the 2-sulfate groups of the 2-O-sulfo-D-glucuronate residues of chondroitin sulfate, heparin and heparitin sulfate.. Functionally, catalyzes the hydrolysis of pseudosubstrates such as p-nitrocatechol sulfate and p-nitrophenyl sulfate. Catalyzes the hydrolysis of the 2-sulfate groups of the 2-O-sulfo-D-glucuronate residues of chondroitin sulfate, heparin and heparitin sulfate. Acts selectively on 2-sulfoglucuronate and lacks activity against 2-sulfoiduronate. The chain is Arylsulfatase K (ARSK) from Homo sapiens (Human).